The sequence spans 130 residues: Histidine triad nucleotide-binding protein 1 (130 aa).

One can recognise an HIT domain in the interval 22–130 (LFGKIIRKEI…GGRQLQWPPG (109 aa)). Positions 114 to 118 (HLHLH) match the Histidine triad motif motif.

The polypeptide is Histidine triad nucleotide-binding protein 1 (hint-1) (Caenorhabditis elegans).